A 660-amino-acid chain; its full sequence is Bifunctional polymyxin resistance protein ArnA (660 aa).

The tract at residues 1 to 304 (MKTVVFAYHD…MLGLVQGSRL (304 aa)) is formyltransferase ArnAFT. 86–88 (HLI) lines the (6R)-10-formyltetrahydrofolate pocket. His104 functions as the Proton donor; for formyltransferase activity in the catalytic mechanism. Residues Arg114 and 136–140 (VKRAD) contribute to the (6R)-10-formyltetrahydrofolate site. The tract at residues 314-660 (RRTRVLILGV…RTVDLTDKPS (347 aa)) is dehydrogenase ArnADH. NAD(+) contacts are provided by residues Asp347 and 368–369 (DI). UDP-alpha-D-glucuronate-binding positions include Ala393, Tyr398, and 432–433 (TS). The Proton acceptor; for decarboxylase activity role is filled by Glu434. Residues Arg460, Asn492, 526–535 (KLIDGGKQKR), and Tyr613 contribute to the UDP-alpha-D-glucuronate site. The Proton donor; for decarboxylase activity role is filled by Arg619.

It in the N-terminal section; belongs to the Fmt family. UDP-L-Ara4N formyltransferase subfamily. This sequence in the C-terminal section; belongs to the NAD(P)-dependent epimerase/dehydratase family. UDP-glucuronic acid decarboxylase subfamily. Homohexamer, formed by a dimer of trimers.

It catalyses the reaction UDP-alpha-D-glucuronate + NAD(+) = UDP-beta-L-threo-pentopyranos-4-ulose + CO2 + NADH. The catalysed reaction is UDP-4-amino-4-deoxy-beta-L-arabinose + (6R)-10-formyltetrahydrofolate = UDP-4-deoxy-4-formamido-beta-L-arabinose + (6S)-5,6,7,8-tetrahydrofolate + H(+). It participates in nucleotide-sugar biosynthesis; UDP-4-deoxy-4-formamido-beta-L-arabinose biosynthesis; UDP-4-deoxy-4-formamido-beta-L-arabinose from UDP-alpha-D-glucuronate: step 1/3. It functions in the pathway nucleotide-sugar biosynthesis; UDP-4-deoxy-4-formamido-beta-L-arabinose biosynthesis; UDP-4-deoxy-4-formamido-beta-L-arabinose from UDP-alpha-D-glucuronate: step 3/3. Its pathway is bacterial outer membrane biogenesis; lipopolysaccharide biosynthesis. Functionally, bifunctional enzyme that catalyzes the oxidative decarboxylation of UDP-glucuronic acid (UDP-GlcUA) to UDP-4-keto-arabinose (UDP-Ara4O) and the addition of a formyl group to UDP-4-amino-4-deoxy-L-arabinose (UDP-L-Ara4N) to form UDP-L-4-formamido-arabinose (UDP-L-Ara4FN). The modified arabinose is attached to lipid A and is required for resistance to polymyxin and cationic antimicrobial peptides. The protein is Bifunctional polymyxin resistance protein ArnA of Shigella flexneri serotype 5b (strain 8401).